Consider the following 527-residue polypeptide: Type II methyltransferase M.XamI (527 aa).

Belongs to the N(4)/N(6)-methyltransferase family.

The catalysed reaction is a 2'-deoxyadenosine in DNA + S-adenosyl-L-methionine = an N(6)-methyl-2'-deoxyadenosine in DNA + S-adenosyl-L-homocysteine + H(+). In terms of biological role, a gamma subtype methylase that recognizes the double-stranded sequence 5'-GTCGAC-3', possibly methylates A-5 on both strands, and protects the DNA from cleavage by the XamI endonuclease. The sequence is that of Type II methyltransferase M.XamI from Xanthomonas campestris pv. amaranthicola.